Consider the following 292-residue polypeptide: Cytidine deaminase (292 aa).

2 CMP/dCMP-type deaminase domains span residues 47 to 167 and 186 to 292; these read TTLK…FGPK and DHQD…YYSL. 88–90 is a substrate binding site; it reads NQE. Position 101 (H101) interacts with Zn(2+). The active-site Proton donor is the E103. The Zn(2+) site is built by C128 and C131.

Belongs to the cytidine and deoxycytidylate deaminase family. As to quaternary structure, homodimer. The cofactor is Zn(2+).

The catalysed reaction is cytidine + H2O + H(+) = uridine + NH4(+). The enzyme catalyses 2'-deoxycytidine + H2O + H(+) = 2'-deoxyuridine + NH4(+). This enzyme scavenges exogenous and endogenous cytidine and 2'-deoxycytidine for UMP synthesis. This is Cytidine deaminase from Haemophilus influenzae (strain ATCC 51907 / DSM 11121 / KW20 / Rd).